A 101-amino-acid polypeptide reads, in one-letter code: Small ribosomal subunit protein uS14 (101 aa).

This sequence belongs to the universal ribosomal protein uS14 family. In terms of assembly, part of the 30S ribosomal subunit. Contacts proteins S3 and S10.

In terms of biological role, binds 16S rRNA, required for the assembly of 30S particles and may also be responsible for determining the conformation of the 16S rRNA at the A site. The sequence is that of Small ribosomal subunit protein uS14 from Rhizorhabdus wittichii (strain DSM 6014 / CCUG 31198 / JCM 15750 / NBRC 105917 / EY 4224 / RW1) (Sphingomonas wittichii).